Here is a 169-residue protein sequence, read N- to C-terminus: Flagellar biosynthetic protein FliU (169 aa).

This sequence belongs to the FliB family.

Required for the secretion of flagellin and expression of motility. The polypeptide is Flagellar biosynthetic protein FliU (fliU) (Salmonella muenchen).